Consider the following 319-residue polypeptide: Acetyl esterase (319 aa).

The Involved in the stabilization of the negatively charged intermediate by the formation of the oxyanion hole motif lies at 91–93; that stretch reads HGG. Active-site residues include serine 165, aspartate 262, and histidine 292.

It belongs to the 'GDXG' lipolytic enzyme family. Homodimer. Interacts with MalT and MelA.

It localises to the cytoplasm. Displays esterase activity towards short chain fatty esters (acyl chain length of up to 8 carbons). Able to hydrolyze triacetylglycerol (triacetin) and tributyrylglycerol (tributyrin), but not trioleylglycerol (triolein) or cholesterol oleate. Negatively regulates MalT activity by antagonizing maltotriose binding. Inhibits MelA galactosidase activity. This chain is Acetyl esterase, found in Escherichia coli O45:K1 (strain S88 / ExPEC).